A 407-amino-acid chain; its full sequence is Shaggy-related protein kinase iota (407 aa).

The segment covering 1–19 has biased composition (low complexity); sequence MASLPLGPQPHALAPPLQL. The interval 1–23 is disordered; it reads MASLPLGPQPHALAPPLQLHDGD. The residue at position 2 (Ala2) is an N-acetylalanine. One can recognise a Protein kinase domain in the interval 70 to 354; the sequence is YMAERVVGTG…ALEACAHPFF (285 aa). ATP is bound by residues 76 to 84 and Lys99; that span reads VGTGSFGIV. The active-site Proton acceptor is Asp195. The residue at position 230 (Tyr230) is a Phosphotyrosine.

It belongs to the protein kinase superfamily. CMGC Ser/Thr protein kinase family. GSK-3 subfamily. In terms of assembly, binds to KIB1. Interacts with BSK6. Autophosphorylated mainly on threonine and serine residues.

It carries out the reaction L-seryl-[protein] + ATP = O-phospho-L-seryl-[protein] + ADP + H(+). The catalysed reaction is L-threonyl-[protein] + ATP = O-phospho-L-threonyl-[protein] + ADP + H(+). In terms of biological role, phosphorylates BSK1, BSK3, BSK5, BSK6, BSK8 and BSK11 in vitro. May mediate extracellular signals to regulate transcription in differentiating cells. This chain is Shaggy-related protein kinase iota (ASK9), found in Arabidopsis thaliana (Mouse-ear cress).